The sequence spans 415 residues: Small ribosomal subunit protein uS5m (415 aa).

The interval 1–31 is disordered; the sequence is MRRSGPELWKTLTSVSKSGQKKGRRNTRQPV. The S5 DRBM domain maps to 131–197; it reads FETYCLEVKR…GMASRKIFHV (67 aa). The tract at residues 396-415 is disordered; sequence GVEPMPLGIGLSHVVPKKDD.

It belongs to the universal ribosomal protein uS5 family. As to quaternary structure, component of the mitochondrial ribosome small subunit (28S) which comprises a 12S rRNA and about 30 distinct proteins.

It localises to the mitochondrion. The sequence is that of Small ribosomal subunit protein uS5m (mrps-5) from Caenorhabditis briggsae.